Consider the following 272-residue polypeptide: Phosphate import ATP-binding protein PstB (272 aa).

Positions Leu-26–Ile-267 constitute an ABC transporter domain. Position 58 to 65 (Gly-58 to Ser-65) interacts with ATP.

The protein belongs to the ABC transporter superfamily. Phosphate importer (TC 3.A.1.7) family. In terms of assembly, the complex is composed of two ATP-binding proteins (PstB), two transmembrane proteins (PstC and PstA) and a solute-binding protein (PstS).

It is found in the cell inner membrane. It catalyses the reaction phosphate(out) + ATP + H2O = ADP + 2 phosphate(in) + H(+). Its function is as follows. Part of the ABC transporter complex PstSACB involved in phosphate import. Responsible for energy coupling to the transport system. The protein is Phosphate import ATP-binding protein PstB of Idiomarina loihiensis (strain ATCC BAA-735 / DSM 15497 / L2-TR).